We begin with the raw amino-acid sequence, 364 residues long: tRNA-specific 2-thiouridylase MnmA 1 (364 aa).

ATP contacts are provided by residues 10 to 17 (GMSGGVDS) and Met-36. The active-site Nucleophile is Cys-106. The cysteines at positions 106 and 204 are disulfide-linked. ATP is bound at residue Gly-130. The tract at residues 154–156 (KDQ) is interaction with tRNA. The Cysteine persulfide intermediate role is filled by Cys-204. The tract at residues 310 to 311 (RY) is interaction with tRNA.

Belongs to the MnmA/TRMU family.

The protein localises to the cytoplasm. The catalysed reaction is S-sulfanyl-L-cysteinyl-[protein] + uridine(34) in tRNA + AH2 + ATP = 2-thiouridine(34) in tRNA + L-cysteinyl-[protein] + A + AMP + diphosphate + H(+). In terms of biological role, catalyzes the 2-thiolation of uridine at the wobble position (U34) of tRNA, leading to the formation of s(2)U34. The chain is tRNA-specific 2-thiouridylase MnmA 1 from Thermoanaerobacter sp. (strain X514).